Consider the following 299-residue polypeptide: Tyrosine recombinase XerD (299 aa).

Positions 3–88 (QQDNPLIEQF…AMRRLFQYLY (86 aa)) constitute a Core-binding (CB) domain. The Tyr recombinase domain occupies 109–293 (RLPKDLSEAQ…ATERLRQLHQ (185 aa)). Catalysis depends on residues arginine 149, lysine 173, histidine 245, arginine 248, and histidine 271. Catalysis depends on tyrosine 280, which acts as the O-(3'-phospho-DNA)-tyrosine intermediate.

Belongs to the 'phage' integrase family. XerD subfamily. As to quaternary structure, forms a cyclic heterotetrameric complex composed of two molecules of XerC and two molecules of XerD, in which XerC interacts with XerD via its C-terminal region, XerD interacts with XerC via its C-terminal region and so on.

Its subcellular location is the cytoplasm. Its activity is regulated as follows. FtsK may regulate the catalytic switch between XerC and XerD in the heterotetrameric complex during the two steps of the recombination process. Its function is as follows. Site-specific tyrosine recombinase, which acts by catalyzing the cutting and rejoining of the recombining DNA molecules. Binds cooperatively to specific DNA consensus sequences that are separated from XerC binding sites by a short central region, forming the heterotetrameric XerC-XerD complex that recombines DNA substrates. The complex is essential to convert dimers of the bacterial chromosome into monomers to permit their segregation at cell division. It also contributes to the segregational stability of plasmids. In the complex XerD specifically exchanges the bottom DNA strands. This Yersinia pestis protein is Tyrosine recombinase XerD.